The primary structure comprises 324 residues: Methyltransferase pytC (324 aa).

This sequence belongs to the methyltransferase superfamily. LaeA methyltransferase family.

It functions in the pathway secondary metabolite biosynthesis. Methyltransferase; part of the gene cluster that mediates the biosynthesis of pyranterreones, a family of antioxidative compounds. The first step of pyranonigrins biosynthesis is performed by the hybrid PKS-NRPS synthetase pytA that condenses 4 malonyl-CoA units ato the acetyl starter unit by the modular PKS of pytA. The acyl chain is then connected to an L-serine through the amide bond by the modular NRPS of pytA. A tetramic acid is formed and released from the PKS-NRPS pytA to give pyranterreone 5 with the help of the thioesterase pytI. Pyranterreone 5 could be methylated by pytC to afford pyranterreone 6. Both pyranterreones 5 and 6 are subsequently oxidized by the FAD-linked oxidoreductase pytB and the cytochrome P450 monooxygenase pytD to form the fused gamma-pyrone core, resulting in pyranterreones 7 and 11, respectively. The hydroxy group at C-8 of pyranterreones 7 and 11 are dehydrated by the aspartyl protease pytH to form a delta-7 double bond to give pyranterreones 3 and 1, 2 accordingly. The exo-methylene of pyranterreone 3 could be reduced into a pendant methyl by reductase pytE to provide pyranterreone 4, also known as cordylactam. Pyranterreone 4 can be reconverted to pyranterreone 3 through pytB-catalyzed dehydrogenation or further oxidized to pyranterreones 9 and 10. This Aspergillus terreus (strain NIH 2624 / FGSC A1156) protein is Methyltransferase pytC.